The following is a 283-amino-acid chain: tRNA-cytidine(32) 2-sulfurtransferase (283 aa).

The PP-loop motif signature appears at 37–42 (SGGKDS). C112, C115, and C203 together coordinate [4Fe-4S] cluster.

Belongs to the TtcA family. In terms of assembly, homodimer. It depends on Mg(2+) as a cofactor. Requires [4Fe-4S] cluster as cofactor.

The protein localises to the cytoplasm. It catalyses the reaction cytidine(32) in tRNA + S-sulfanyl-L-cysteinyl-[cysteine desulfurase] + AH2 + ATP = 2-thiocytidine(32) in tRNA + L-cysteinyl-[cysteine desulfurase] + A + AMP + diphosphate + H(+). It functions in the pathway tRNA modification. Catalyzes the ATP-dependent 2-thiolation of cytidine in position 32 of tRNA, to form 2-thiocytidine (s(2)C32). The sulfur atoms are provided by the cysteine/cysteine desulfurase (IscS) system. This is tRNA-cytidine(32) 2-sulfurtransferase from Legionella pneumophila subsp. pneumophila (strain Philadelphia 1 / ATCC 33152 / DSM 7513).